The chain runs to 263 residues: Energy-coupling factor transporter transmembrane protein EcfT (263 aa).

4 consecutive transmembrane segments (helical) span residues 22 to 42 (IIFA…ATNI), 69 to 89 (ILFL…EGAV), 105 to 125 (LAII…LVTL), and 243 to 263 (TGLI…RGGF).

It belongs to the energy-coupling factor EcfT family. As to quaternary structure, forms a stable energy-coupling factor (ECF) transporter complex composed of 2 membrane-embedded substrate-binding proteins (S component), 2 ATP-binding proteins (A component) and 2 transmembrane proteins (T component). May be able to interact with more than 1 S component at a time.

The protein resides in the cell membrane. Transmembrane (T) component of an energy-coupling factor (ECF) ABC-transporter complex. Unlike classic ABC transporters this ECF transporter provides the energy necessary to transport a number of different substrates. This chain is Energy-coupling factor transporter transmembrane protein EcfT, found in Exiguobacterium sibiricum (strain DSM 17290 / CCUG 55495 / CIP 109462 / JCM 13490 / 255-15).